Reading from the N-terminus, the 237-residue chain is Pyridoxal phosphate homeostasis protein (237 aa).

Lys-31 is subject to N6-(pyridoxal phosphate)lysine.

It belongs to the pyridoxal phosphate-binding protein YggS/PROSC family.

It localises to the cytoplasm. It is found in the nucleus. Its function is as follows. Pyridoxal 5'-phosphate (PLP)-binding protein, which may be involved in intracellular homeostatic regulation of pyridoxal 5'-phosphate (PLP), the active form of vitamin B6. The protein is Pyridoxal phosphate homeostasis protein of Schizosaccharomyces pombe (strain 972 / ATCC 24843) (Fission yeast).